Here is a 245-residue protein sequence, read N- to C-terminus: MDNGIRVKLVNYTKKPLETVTWAALISYWDEWETETFGRMSDKDVEMHLPRVLGYGHESILEHATLTFAIEGCSRVCSHQLVRHRLASYTQQSQRYIVLNPEDVEETFVIPSGIKEDPELLAEWKELMKKSIELYKKSVERGQHQEDARFILPQAVRTKIVVTMNLRELKHFLGLRACERAQWEIREVAWKMLEEIAKNDELRPIIKWAKLGPRCVQLGYCPEGELMPPGCWKRTGEKWKTLFEG.

The ThyX domain maps to 5–210; sequence IRVKLVNYTK…ELRPIIKWAK (206 aa). FAD contacts are provided by residues S59, 83–85, and Q91; that span reads RHR. DUMP contacts are provided by residues 80 to 83, 91 to 95, and R149; these read QLVR and QQSQR. The ThyX motif motif lies at 83 to 93; it reads RHRLASYTQQS. FAD contacts are provided by residues 165-167 and H171; that span reads NLR. DUMP is bound at residue R176. R176 serves as the catalytic Involved in ionization of N3 of dUMP, leading to its activation.

This sequence belongs to the thymidylate synthase ThyX family. As to quaternary structure, homotetramer. FAD is required as a cofactor.

The enzyme catalyses dUMP + (6R)-5,10-methylene-5,6,7,8-tetrahydrofolate + NADPH + H(+) = dTMP + (6S)-5,6,7,8-tetrahydrofolate + NADP(+). It functions in the pathway pyrimidine metabolism; dTTP biosynthesis. Functionally, catalyzes the reductive methylation of 2'-deoxyuridine-5'-monophosphate (dUMP) to 2'-deoxythymidine-5'-monophosphate (dTMP) while utilizing 5,10-methylenetetrahydrofolate (mTHF) as the methyl donor, and NADPH and FADH(2) as the reductant. This is Flavin-dependent thymidylate synthase from Thermococcus kodakarensis (strain ATCC BAA-918 / JCM 12380 / KOD1) (Pyrococcus kodakaraensis (strain KOD1)).